The primary structure comprises 181 residues: Glutamyl-tRNA(Gln) amidotransferase subunit C, chloroplastic/mitochondrial (181 aa).

The protein belongs to the GatC family. In terms of assembly, subunit of the heterotrimeric GatCAB amidotransferase (AdT) complex, composed of A, B and C subunits.

It is found in the mitochondrion. Its subcellular location is the plastid. It localises to the chloroplast. The catalysed reaction is L-glutamyl-tRNA(Gln) + L-glutamine + ATP + H2O = L-glutaminyl-tRNA(Gln) + L-glutamate + ADP + phosphate + H(+). Allows the formation of correctly charged Gln-tRNA(Gln) through the transamidation of misacylated Glu-tRNA(Gln) in chloroplasts and mitochondria. The reaction takes place in the presence of glutamine and ATP through an activated gamma-phospho-Glu-tRNA(Gln). This is Glutamyl-tRNA(Gln) amidotransferase subunit C, chloroplastic/mitochondrial from Picea sitchensis (Sitka spruce).